Consider the following 387-residue polypeptide: Low specificity L-threonine aldolase (387 aa).

Residue K213 is modified to N6-(pyridoxal phosphate)lysine. K228 is covalently cross-linked (Glycyl lysine isopeptide (Lys-Gly) (interchain with G-Cter in ubiquitin)). Residues S367 and S369 each carry the phosphoserine modification. T370 carries the post-translational modification Phosphothreonine.

It belongs to the threonine aldolase family. In terms of assembly, homotetramer. Requires pyridoxal 5'-phosphate as cofactor.

It carries out the reaction L-threonine = acetaldehyde + glycine. The catalysed reaction is L-allo-threonine = acetaldehyde + glycine. It participates in amino-acid biosynthesis; glycine biosynthesis; glycine from L-allo-threonine: step 1/1. The protein operates within amino-acid degradation; L-threonine degradation via aldolase pathway; acetaldehyde and glycine from L-threonine: step 1/1. Functionally, catalyzes the cleavage of L-allo-threonine and L-threonine to glycine and acetaldehyde. The protein is Low specificity L-threonine aldolase (GLY1) of Saccharomyces cerevisiae (strain ATCC 204508 / S288c) (Baker's yeast).